The following is a 468-amino-acid chain: MVFAALDPLGVPLGTAQASFGTDGIRGRVGTLLTPAFILQVGYWCGQVLPDQGPVLIGMDSRSSGAMVASALTAGLTAAGREVWTLGLCPTPAVPGLIRKLGAAGGLMVSASHNPPEDNGIKVFGADGAKLSPAKQGLIEAGLRGEAIGDKGRPTITSCGPAYQRNELLSHYRDALLASVLHQRLDGVPIVLDLCWGAATACGAEVFAALGADLTVLHGEPDGRRINVGCGSTQLEPLRRAVIERGAIMGFAFDGDADRMLALDGHGRVVDGDHVLYLWGSDLQDRQALPQQRLVATVMSNLGFERAWQQRGGVLERTPVGDQHVYAAMVESNAALGGEQSGHILSAAHGLCGDGVLTALQLATLCHGRGLSLGEWLDQSFQAFPQKLVNVRVPDLERRMGWQHCEPLQEAVLAAEAAMGEDGRVLVRASGTEPLLRVMIEAADSAAVEFWTAQLADLAEQHLNRGCV.

The active-site Phosphoserine intermediate is the S112. Residues S112, D254, D256, and D258 each contribute to the Mg(2+) site. S112 is modified (phosphoserine).

Belongs to the phosphohexose mutase family. Requires Mg(2+) as cofactor. In terms of processing, activated by phosphorylation.

The catalysed reaction is alpha-D-glucosamine 1-phosphate = D-glucosamine 6-phosphate. Its function is as follows. Catalyzes the conversion of glucosamine-6-phosphate to glucosamine-1-phosphate. This Prochlorococcus marinus (strain MIT 9313) protein is Phosphoglucosamine mutase.